A 141-amino-acid chain; its full sequence is Nucleoside triphosphatase NudI (141 aa).

The 141-residue stretch at 1-141 (MRQRTIVCPL…RHTLALKGLL (141 aa)) folds into the Nudix hydrolase domain. Residues 38 to 59 (GGVEPGERIEEALRREVREELG) carry the Nudix box motif.

Belongs to the Nudix hydrolase family. NudI subfamily. In terms of assembly, monomer. Mg(2+) is required as a cofactor.

The enzyme catalyses a ribonucleoside 5'-triphosphate + H2O = a ribonucleoside 5'-phosphate + diphosphate + H(+). The catalysed reaction is a 2'-deoxyribonucleoside 5'-triphosphate + H2O = a 2'-deoxyribonucleoside 5'-phosphate + diphosphate + H(+). It catalyses the reaction dUTP + H2O = dUMP + diphosphate + H(+). It carries out the reaction dTTP + H2O = dTMP + diphosphate + H(+). The enzyme catalyses dCTP + H2O = dCMP + diphosphate + H(+). Its function is as follows. Catalyzes the hydrolysis of nucleoside triphosphates, with a preference for pyrimidine deoxynucleoside triphosphates (dUTP, dTTP and dCTP). This Salmonella agona (strain SL483) protein is Nucleoside triphosphatase NudI.